A 433-amino-acid polypeptide reads, in one-letter code: Mannan endo-1,4-beta-mannosidase 2 (433 aa).

Positions 1-28 (MAAPTGNGPVIPILGFLTCVAFIYLSFG) are cleaved as a signal peptide. The N-linked (GlcNAc...) asparagine glycan is linked to Asn46. Trp98 is a substrate binding site. Asn169 carries N-linked (GlcNAc...) asparagine glycosylation. Asn214 lines the substrate pocket. Glu215 (proton donor) is an active-site residue. Tyr295 serves as a coordination point for substrate. Catalysis depends on Glu335, which acts as the Nucleophile. Trp377 is a substrate binding site.

Belongs to the glycosyl hydrolase 5 (cellulase A) family. In terms of tissue distribution, expressed in roots, stems, leaves and seeds.

The protein resides in the secreted. The enzyme catalyses Random hydrolysis of (1-&gt;4)-beta-D-mannosidic linkages in mannans, galactomannans and glucomannans.. The sequence is that of Mannan endo-1,4-beta-mannosidase 2 (MAN2) from Arabidopsis thaliana (Mouse-ear cress).